The sequence spans 242 residues: Purine nucleoside phosphorylase SCO2081 (242 aa).

The Zn(2+) site is built by His68, Cys106, and His123.

This sequence belongs to the purine nucleoside phosphorylase YfiH/LACC1 family. As to quaternary structure, homodimer. Requires Cu(2+) as cofactor. Zn(2+) serves as cofactor.

The catalysed reaction is adenosine + phosphate = alpha-D-ribose 1-phosphate + adenine. It carries out the reaction S-methyl-5'-thioadenosine + phosphate = 5-(methylsulfanyl)-alpha-D-ribose 1-phosphate + adenine. It catalyses the reaction inosine + phosphate = alpha-D-ribose 1-phosphate + hypoxanthine. The enzyme catalyses adenosine + H2O + H(+) = inosine + NH4(+). Its function is as follows. Purine nucleoside enzyme that catalyzes the phosphorolysis of adenosine and inosine nucleosides, yielding D-ribose 1-phosphate and the respective free bases, adenine and hypoxanthine. Also catalyzes the phosphorolysis of S-methyl-5'-thioadenosine into adenine and S-methyl-5-thio-alpha-D-ribose 1-phosphate. Also has adenosine deaminase activity. This is Purine nucleoside phosphorylase SCO2081 from Streptomyces coelicolor (strain ATCC BAA-471 / A3(2) / M145).